The primary structure comprises 475 residues: Ribulose bisphosphate carboxylase large chain (475 aa).

A propeptide spanning residues 1–2 is cleaved from the precursor; sequence MS. Residue Pro3 is modified to N-acetylproline. N6,N6,N6-trimethyllysine is present on Lys14. Substrate contacts are provided by Asn123 and Thr173. The Proton acceptor role is filled by Lys175. Lys177 serves as a coordination point for substrate. Mg(2+)-binding residues include Lys201, Asp203, and Glu204. Lys201 bears the N6-carboxylysine mark. His294 functions as the Proton acceptor in the catalytic mechanism. Arg295, His327, and Ser379 together coordinate substrate.

This sequence belongs to the RuBisCO large chain family. Type I subfamily. In terms of assembly, heterohexadecamer of 8 large chains and 8 small chains; disulfide-linked. The disulfide link is formed within the large subunit homodimers. Mg(2+) serves as cofactor. Post-translationally, the disulfide bond which can form in the large chain dimeric partners within the hexadecamer appears to be associated with oxidative stress and protein turnover.

Its subcellular location is the plastid. The protein localises to the chloroplast. It catalyses the reaction 2 (2R)-3-phosphoglycerate + 2 H(+) = D-ribulose 1,5-bisphosphate + CO2 + H2O. The enzyme catalyses D-ribulose 1,5-bisphosphate + O2 = 2-phosphoglycolate + (2R)-3-phosphoglycerate + 2 H(+). RuBisCO catalyzes two reactions: the carboxylation of D-ribulose 1,5-bisphosphate, the primary event in carbon dioxide fixation, as well as the oxidative fragmentation of the pentose substrate in the photorespiration process. Both reactions occur simultaneously and in competition at the same active site. The polypeptide is Ribulose bisphosphate carboxylase large chain (Picea sitchensis (Sitka spruce)).